The sequence spans 258 residues: UPF0246 protein Shew_1093 (258 aa).

The protein belongs to the UPF0246 family.

The sequence is that of UPF0246 protein Shew_1093 from Shewanella loihica (strain ATCC BAA-1088 / PV-4).